The sequence spans 206 residues: Reticulon-like protein B13 (206 aa).

Positions 16–206 (VEDIYLWRRK…GTEEKVKKSE (191 aa)) constitute a Reticulon domain. A run of 3 helical transmembrane segments spans residues 27–47 (LAFS…FYGF), 50–70 (ITIV…WGSL), and 134–154 (IGNL…GLTV).

The protein resides in the endoplasmic reticulum membrane. This Arabidopsis thaliana (Mouse-ear cress) protein is Reticulon-like protein B13 (RTNLB13).